A 209-amino-acid chain; its full sequence is Probable GTP-binding protein EngB (209 aa).

The EngB-type G domain maps to 22–198 (TPLEIAFVGR…NRTVGSWFDA (177 aa)). S37 and T59 together coordinate Mg(2+).

It belongs to the TRAFAC class TrmE-Era-EngA-EngB-Septin-like GTPase superfamily. EngB GTPase family. Mg(2+) serves as cofactor.

In terms of biological role, necessary for normal cell division and for the maintenance of normal septation. In Neisseria gonorrhoeae, this protein is Probable GTP-binding protein EngB.